The following is a 245-amino-acid chain: Thiopurine S-methyltransferase (245 aa).

29–40 (WQDKWVSHKIGF) serves as a coordination point for S-adenosyl-L-methionine. Residue F40 coordinates substrate. K58 is modified (N6-acetyllysine). S-adenosyl-L-methionine is bound by residues L69, E90, 134–135 (SI), and R152.

Belongs to the class I-like SAM-binding methyltransferase superfamily. TPMT family. In terms of assembly, monomer.

It localises to the cytoplasm. The enzyme catalyses S-adenosyl-L-methionine + a thiopurine = S-adenosyl-L-homocysteine + a thiopurine S-methylether.. The polypeptide is Thiopurine S-methyltransferase (TPMT) (Oryctolagus cuniculus (Rabbit)).